Here is a 131-residue protein sequence, read N- to C-terminus: Profilin-1 (131 aa).

Belongs to the profilin family. In terms of assembly, occurs in many kinds of cells as a complex with monomeric actin in a 1:1 ratio.

The protein resides in the cytoplasm. The protein localises to the cytoskeleton. In terms of biological role, binds to actin and affects the structure of the cytoskeleton. At high concentrations, profilin prevents the polymerization of actin, whereas it enhances it at low concentrations. By binding to PIP2, it inhibits the formation of IP3 and DG. In Lilium longiflorum (Trumpet lily), this protein is Profilin-1.